Here is a 62-residue protein sequence, read N- to C-terminus: Teretoxin Tsu1.1 (62 aa).

The first 21 residues, 1 to 21 (MSCFPVLFVMMLLASQSVWAF), serve as a signal peptide directing secretion. Positions 22–40 (PEPETRIGTARDAESMGVR) are excised as a propeptide.

The protein belongs to the teretoxin A (TA) superfamily. In terms of processing, contains 2 disulfide bonds. As to expression, expressed by the venom duct.

It localises to the secreted. The sequence is that of Teretoxin Tsu1.1 from Terebra subulata (Chocolate spotted auger).